A 288-amino-acid polypeptide reads, in one-letter code: DegV domain-containing protein DR_1903 (288 aa).

Positions Ile2 to Pro280 constitute a DegV domain. Hexadecanoate is bound by residues Thr59 and Thr93.

Its function is as follows. May bind long-chain fatty acids, such as palmitate, and may play a role in lipid transport or fatty acid metabolism. This is DegV domain-containing protein DR_1903 from Deinococcus radiodurans (strain ATCC 13939 / DSM 20539 / JCM 16871 / CCUG 27074 / LMG 4051 / NBRC 15346 / NCIMB 9279 / VKM B-1422 / R1).